Consider the following 319-residue polypeptide: Acetylglutamate kinase (319 aa).

Substrate-binding positions include 74–75 (GG), Arg96, and Asn210.

It belongs to the acetylglutamate kinase family. ArgB subfamily.

The protein resides in the cytoplasm. It carries out the reaction N-acetyl-L-glutamate + ATP = N-acetyl-L-glutamyl 5-phosphate + ADP. It participates in amino-acid biosynthesis; L-arginine biosynthesis; N(2)-acetyl-L-ornithine from L-glutamate: step 2/4. In terms of biological role, catalyzes the ATP-dependent phosphorylation of N-acetyl-L-glutamate. This is Acetylglutamate kinase from Pseudarthrobacter chlorophenolicus (strain ATCC 700700 / DSM 12829 / CIP 107037 / JCM 12360 / KCTC 9906 / NCIMB 13794 / A6) (Arthrobacter chlorophenolicus).